Here is a 403-residue protein sequence, read N- to C-terminus: Octaketide synthase 2 (403 aa).

The active site involves Cys174. Residues Ser281 and 318-321 contribute to the CoA site; that span reads GGRA.

It belongs to the thiolase-like superfamily. Chalcone/stilbene synthases family. In terms of assembly, homodimer.

Its pathway is secondary metabolite biosynthesis; flavonoid biosynthesis. In terms of biological role, catalyzes the iterative condensations of 8 molecules of malonyl-CoA to produce aromatic octaketides, SEK4 and SEK4b, the products of the minimal polyketide synthase for the benzoisochromanequinone actinorhodin. May be involved in the biosynthesis of the octaketide barbaloin. The protein is Octaketide synthase 2 (PKS4) of Aloe arborescens (Kidachi aloe).